The sequence spans 265 residues: 4-hydroxy-tetrahydrodipicolinate reductase (265 aa).

NAD(+) contacts are provided by residues Gly-7 to Met-12 and Asp-33. An NADP(+)-binding site is contributed by Arg-34. Residues Gly-96–Thr-98 and Ala-120–Met-123 each bind NAD(+). The active-site Proton donor/acceptor is His-153. His-154 contacts (S)-2,3,4,5-tetrahydrodipicolinate. The active-site Proton donor is Lys-157. Position 163 to 164 (Gly-163 to Thr-164) interacts with (S)-2,3,4,5-tetrahydrodipicolinate.

The protein belongs to the DapB family.

It localises to the cytoplasm. It carries out the reaction (S)-2,3,4,5-tetrahydrodipicolinate + NAD(+) + H2O = (2S,4S)-4-hydroxy-2,3,4,5-tetrahydrodipicolinate + NADH + H(+). It catalyses the reaction (S)-2,3,4,5-tetrahydrodipicolinate + NADP(+) + H2O = (2S,4S)-4-hydroxy-2,3,4,5-tetrahydrodipicolinate + NADPH + H(+). It functions in the pathway amino-acid biosynthesis; L-lysine biosynthesis via DAP pathway; (S)-tetrahydrodipicolinate from L-aspartate: step 4/4. Functionally, catalyzes the conversion of 4-hydroxy-tetrahydrodipicolinate (HTPA) to tetrahydrodipicolinate. This is 4-hydroxy-tetrahydrodipicolinate reductase from Burkholderia ambifaria (strain ATCC BAA-244 / DSM 16087 / CCUG 44356 / LMG 19182 / AMMD) (Burkholderia cepacia (strain AMMD)).